We begin with the raw amino-acid sequence, 946 residues long: Bifunctional glutamine synthetase adenylyltransferase/adenylyl-removing enzyme (946 aa).

Residues 1–440 (MKPLSSPLQQ…VFNELIGDDE (440 aa)) are adenylyl removase. The adenylyl transferase stretch occupies residues 449–946 (SEQWRELWQD…ASWQKWLVEE (498 aa)).

It belongs to the GlnE family. It depends on Mg(2+) as a cofactor.

The enzyme catalyses [glutamine synthetase]-O(4)-(5'-adenylyl)-L-tyrosine + phosphate = [glutamine synthetase]-L-tyrosine + ADP. It catalyses the reaction [glutamine synthetase]-L-tyrosine + ATP = [glutamine synthetase]-O(4)-(5'-adenylyl)-L-tyrosine + diphosphate. Involved in the regulation of glutamine synthetase GlnA, a key enzyme in the process to assimilate ammonia. When cellular nitrogen levels are high, the C-terminal adenylyl transferase (AT) inactivates GlnA by covalent transfer of an adenylyl group from ATP to specific tyrosine residue of GlnA, thus reducing its activity. Conversely, when nitrogen levels are low, the N-terminal adenylyl removase (AR) activates GlnA by removing the adenylyl group by phosphorolysis, increasing its activity. The regulatory region of GlnE binds the signal transduction protein PII (GlnB) which indicates the nitrogen status of the cell. In Shigella dysenteriae serotype 1 (strain Sd197), this protein is Bifunctional glutamine synthetase adenylyltransferase/adenylyl-removing enzyme.